The following is an 845-amino-acid chain: Protein translocase subunit SecA (845 aa).

Residues Gln88, 106 to 110, and Asp495 each bind ATP; that span reads GEGKT. The segment at 804 to 838 is disordered; sequence SNRANRPQKKAKRQPIVKPDKPGRNDPCPCGSGKK. Residues 809–818 show a composition bias toward basic residues; it reads RPQKKAKRQP. Zn(2+) is bound by residues Cys831, Cys833, Cys842, and Cys843.

Belongs to the SecA family. Monomer and homodimer. Part of the essential Sec protein translocation apparatus which comprises SecA, SecYEG and auxiliary proteins SecDF. Other proteins may also be involved. The cofactor is Zn(2+).

It localises to the cell inner membrane. The protein localises to the cytoplasm. It catalyses the reaction ATP + H2O + cellular proteinSide 1 = ADP + phosphate + cellular proteinSide 2.. In terms of biological role, part of the Sec protein translocase complex. Interacts with the SecYEG preprotein conducting channel. Has a central role in coupling the hydrolysis of ATP to the transfer of proteins into and across the cell membrane, serving as an ATP-driven molecular motor driving the stepwise translocation of polypeptide chains across the membrane. This Halothermothrix orenii (strain H 168 / OCM 544 / DSM 9562) protein is Protein translocase subunit SecA.